A 425-amino-acid chain; its full sequence is Serine--tRNA ligase 2 (425 aa).

234–236 (TAE) contacts L-serine. 265 to 267 (RVE) contributes to the ATP binding site. Glutamate 288 serves as a coordination point for L-serine. 352–355 (EVSS) is a binding site for ATP. Serine 388 contributes to the L-serine binding site.

Belongs to the class-II aminoacyl-tRNA synthetase family. Type-1 seryl-tRNA synthetase subfamily. In terms of assembly, homodimer. The tRNA molecule binds across the dimer.

The protein resides in the cytoplasm. It catalyses the reaction tRNA(Ser) + L-serine + ATP = L-seryl-tRNA(Ser) + AMP + diphosphate + H(+). The enzyme catalyses tRNA(Sec) + L-serine + ATP = L-seryl-tRNA(Sec) + AMP + diphosphate + H(+). It participates in aminoacyl-tRNA biosynthesis; selenocysteinyl-tRNA(Sec) biosynthesis; L-seryl-tRNA(Sec) from L-serine and tRNA(Sec): step 1/1. Functionally, catalyzes the attachment of serine to tRNA(Ser). Is also able to aminoacylate tRNA(Sec) with serine, to form the misacylated tRNA L-seryl-tRNA(Sec), which will be further converted into selenocysteinyl-tRNA(Sec). The protein is Serine--tRNA ligase 2 of Clostridium acetobutylicum (strain ATCC 824 / DSM 792 / JCM 1419 / IAM 19013 / LMG 5710 / NBRC 13948 / NRRL B-527 / VKM B-1787 / 2291 / W).